Consider the following 155-residue polypeptide: UPF0178 protein mlr0875 (155 aa).

It belongs to the UPF0178 family.

This chain is UPF0178 protein mlr0875, found in Mesorhizobium japonicum (strain LMG 29417 / CECT 9101 / MAFF 303099) (Mesorhizobium loti (strain MAFF 303099)).